A 311-amino-acid chain; its full sequence is S-adenosyl-L-methionine-dependent tRNA 4-demethylwyosine synthase (311 aa).

[4Fe-4S] cluster is bound by residues cysteine 26, cysteine 39, cysteine 52, cysteine 62, cysteine 66, and cysteine 69. Residues 45 to 283 enclose the Radical SAM core domain; the sequence is YGIETHRCIQ…LKLAKMLDEN (239 aa).

It belongs to the TYW1 family. Monomer. [4Fe-4S] cluster serves as cofactor.

It localises to the cytoplasm. The catalysed reaction is N(1)-methylguanosine(37) in tRNA(Phe) + pyruvate + S-adenosyl-L-methionine = 4-demethylwyosine(37) in tRNA(Phe) + 5'-deoxyadenosine + L-methionine + CO2 + H2O. Its function is as follows. Component of the wyosine derivatives biosynthesis pathway that catalyzes the condensation of N-methylguanine with 2 carbon atoms from pyruvate to form the tricyclic 4-demethylwyosine (imG-14) on guanosine-37 of tRNA(Phe). The sequence is that of S-adenosyl-L-methionine-dependent tRNA 4-demethylwyosine synthase from Methanocaldococcus jannaschii (strain ATCC 43067 / DSM 2661 / JAL-1 / JCM 10045 / NBRC 100440) (Methanococcus jannaschii).